The following is a 134-amino-acid chain: Small ribosomal subunit protein uS9 (134 aa).

The disordered stretch occupies residues 114–134; that stretch reads QKEAKNFGGPGARSKYQKSYR.

This sequence belongs to the universal ribosomal protein uS9 family.

The protein is Small ribosomal subunit protein uS9 of Methanosarcina mazei (strain ATCC BAA-159 / DSM 3647 / Goe1 / Go1 / JCM 11833 / OCM 88) (Methanosarcina frisia).